The following is a 1050-amino-acid chain: Transcription intermediary factor 1-alpha (1050 aa).

Lys7 participates in a covalent cross-link: Glycyl lysine isopeptide (Lys-Gly) (interchain with G-Cter in SUMO2). Over residues 15–30 the composition is skewed to low complexity; sequence ASAAASGGPSAAPSGE. The tract at residues 15–44 is disordered; sequence ASAAASGGPSAAPSGENEAESRQGPDSERG. Positions 33 to 44 are enriched in basic and acidic residues; it reads AESRQGPDSERG. The RING-type zinc-finger motif lies at 56–82; the sequence is CAVCHQNIQSRAPKLLPCLHSFCQRCL. At Thr101 the chain carries Phosphothreonine. Ser110 is subject to Phosphoserine. 2 consecutive B box-type zinc fingers follow at residues 158-211 and 218-259; these read KSNQ…VSPE and QRPV…YQFI. Zn(2+)-binding residues include Cys163, Cys166, Cys187, and His200. Lys205 is covalently cross-linked (Glycyl lysine isopeptide (Lys-Gly) (interchain with G-Cter in SUMO2)). Zn(2+) is bound by residues Cys223, His226, Cys246, and His251. A Glycyl lysine isopeptide (Lys-Gly) (interchain with G-Cter in SUMO2) cross-link involves residue Lys276. Positions 289-359 form a coiled coil; that stretch reads NQIQNRIIEV…AGLSKQLEHV (71 aa). Residues 429–456 are disordered; the sequence is ESQPQMPKQNPVVEQNSQPPSGLSSNQL. Over residues 431-456 the composition is skewed to polar residues; that stretch reads QPQMPKQNPVVEQNSQPPSGLSSNQL. Residues Lys436 and Lys458 each participate in a glycyl lysine isopeptide (Lys-Gly) (interchain with G-Cter in SUMO2) cross-link. Position 469 is an omega-N-methylarginine (Arg469). 2 stretches are compositionally biased toward low complexity: residues 476–490 and 499–510; these read QVMAQRQQVQRRPAP and QGPIQQPSISHQ. The segment at 476–550 is disordered; sequence QVMAQRQQVQ…PPNQNIPRQA (75 aa). Over residues 526 to 535 the composition is skewed to pro residues; that stretch reads PNGPVLPPHP. A Glycyl lysine isopeptide (Lys-Gly) (interchain with G-Cter in SUMO2) cross-link involves residue Lys552. A disordered region spans residues 571-594; the sequence is ISSGQGTPSTTNSTSSTPSSPTIT. Positions 577–594 are enriched in low complexity; the sequence is TPSTTNSTSSTPSSPTIT. Residue Lys641 forms a Glycyl lysine isopeptide (Lys-Gly) (interchain with G-Cter in SUMO2) linkage. The disordered stretch occupies residues 643-712; sequence TNIDHGQPRP…PAGADSTHKV (70 aa). Ser654, Ser660, and Ser667 each carry phosphoserine. Residues 654-666 are compositionally biased toward polar residues; that stretch reads SNRTVQSPNSSVP. A compositionally biased stretch (low complexity) spans 685 to 707; sequence SPSASSVGSRGSSGSSSKPAGAD. Residues Lys702 and Lys711 each participate in a glycyl lysine isopeptide (Lys-Gly) (interchain with G-Cter in SUMO2) cross-link. Lys723 is covalently cross-linked (Glycyl lysine isopeptide (Lys-Gly) (interchain with G-Cter in SUMO1); alternate). Lys723 is covalently cross-linked (Glycyl lysine isopeptide (Lys-Gly) (interchain with G-Cter in SUMO2); alternate). A Glycyl lysine isopeptide (Lys-Gly) (interchain with G-Cter in SUMO2) cross-link involves residue Lys741. A Phosphoserine modification is found at Ser744. The interval 754–779 is nuclear receptor binding site (NRBS); sequence NYPRSILTSLLLNSSQSSTSEETVLR. The disordered stretch occupies residues 766–824; the sequence is NSSQSSTSEETVLRSDAPDSTGDQPGLHQDNSSNGKSEWLDPSQKSPLHVGETRKEDDP. Residue Ser768 is modified to Phosphoserine; by ATM. Residue Lys801 forms a Glycyl lysine isopeptide (Lys-Gly) (interchain with G-Cter in SUMO2) linkage. Ser808 bears the Phosphoserine mark. A Glycyl lysine isopeptide (Lys-Gly) (interchain with G-Cter in SUMO2) cross-link involves residue Lys810. A Phosphoserine modification is found at Ser811. Thr818 bears the Phosphothreonine mark. A PHD-type zinc finger spans residues 826-873; sequence EDWCAVCQNGGELLCCEKCPKVFHLSCHVPTLTNFPSGEWICTFCRDL. The interval 834 to 840 is interaction with histone H3 that is not methylated at 'Lys-4' (H3K4me0); sequence NGGELLC. Residue Lys875 forms a Glycyl lysine isopeptide (Lys-Gly) (interchain with G-Cter in SUMO2) linkage. The short motif at 891 to 907 is the Nuclear localization signal element; that stretch reads KKKTEGLVKLTPIDKRK. In terms of domain architecture, Bromo spans 899–1004; sequence KLTPIDKRKC…NYFEELLKNL (106 aa). Lys949 is covalently cross-linked (Glycyl lysine isopeptide (Lys-Gly) (interchain with G-Cter in SUMO2)). Residues 979-980 form an interaction with histone H3 that is acetylated at 'Lys-23' (H3K23ac) region; it reads FN. Lys992 is covalently cross-linked (Glycyl lysine isopeptide (Lys-Gly) (interchain with G-Cter in SUMO2)). The span at 1011–1026 shows a compositional bias: basic and acidic residues; sequence PKPEFRNESEDNKFSD. The segment at 1011-1036 is disordered; that stretch reads PKPEFRNESEDNKFSDDSDDDFVQPR. Ser1019, Ser1025, and Ser1028 each carry phosphoserine. Lys1041 participates in a covalent cross-link: Glycyl lysine isopeptide (Lys-Gly) (interchain with G-Cter in SUMO2). Phosphoserine is present on Ser1042.

In terms of assembly, interacts with CARM1, NCOA2/GRIP1, PML, KAT5/TIP60, BRD7, CBX1, CBX3 and CBX5. Part of a coactivator complex containing TRIM24, NCOA2 and CARM1. Interacts with NR3C2/MCR. Interacts with the ligand-binding domain of estrogen receptors (in vitro). Interaction with DNA-bound estrogen receptors requires the presence of estradiol. Interacts with AR and p53/TP53. Interacts (via bromo domain) with histone H3 (via N-terminus), provided that it is not methylated at 'Lys-4' (H3K4me0). Does not interact with histone H3 that is methylated at 'Lys-4' (H3K4me1, H3K4me2 or H3K4me3). Interacts (via bromo domain) with histone H3 (via N-terminus) that is acetylated at 'Lys-23' (H3K23ac). Has the highest affinity for histone H3 that is both unmodified at 'Lys-4' (H3K4me0) and acetylated at 'Lys-23' (H3K23ac). Has very low affinity for histone H3 that is methylated at 'Lys-9' (H3K9me), or acetylated at both 'Lys-9' (H3K9ac) and 'Lys-14' (H3K14ac), or acetylated at 'Lys-27' (H3K27ac) (in vitro). Interacts with TRIM16. Post-translationally, phosphorylated at Ser-768 by ATM kinase induces ubiquitination and degradation during DNA damage. Sumoylated. In terms of processing, undergoes ubiquitination-mediated degradation in response to DNA damage.

Its subcellular location is the nucleus. The protein resides in the cytoplasm. It is found in the mitochondrion. The enzyme catalyses S-ubiquitinyl-[E2 ubiquitin-conjugating enzyme]-L-cysteine + [acceptor protein]-L-lysine = [E2 ubiquitin-conjugating enzyme]-L-cysteine + N(6)-ubiquitinyl-[acceptor protein]-L-lysine.. Its pathway is protein modification; protein ubiquitination. Its function is as follows. Transcriptional coactivator that interacts with numerous nuclear receptors and coactivators and modulates the transcription of target genes. Interacts with chromatin depending on histone H3 modifications, having the highest affinity for histone H3 that is both unmodified at 'Lys-4' (H3K4me0) and acetylated at 'Lys-23' (H3K23ac). Has E3 protein-ubiquitin ligase activity. During the DNA damage response, participates in an autoregulatory feedback loop with TP53. Early in response to DNA damage, ATM kinase phosphorylates TRIM24 leading to its ubiquitination and degradation. After sufficient DNA repair has occurred, TP53 activates TRIM24 transcription, ultimately leading to TRIM24-mediated TP53 ubiquitination and degradation. Plays a role in the regulation of cell proliferation and apoptosis, at least in part via its effects on p53/TP53 levels. Up-regulates ligand-dependent transcription activation by AR, GCR/NR3C1, thyroid hormone receptor (TR) and ESR1. Modulates transcription activation by retinoic acid (RA) receptors, including RARA. Plays a role in regulating retinoic acid-dependent proliferation of hepatocytes. Also participates in innate immunity by mediating the specific 'Lys-63'-linked ubiquitination of TRAF3 leading to activation of downstream signal transduction of the type I IFN pathway. Additionally, negatively regulates NLRP3/CASP1/IL-1beta-mediated pyroptosis and cell migration probably by ubiquitinating NLRP3. In Homo sapiens (Human), this protein is Transcription intermediary factor 1-alpha (TRIM24).